The primary structure comprises 263 residues: Undecaprenyl-diphosphatase (263 aa).

6 helical membrane-spanning segments follow: residues 40–60 (PGVL…LVYF), 87–107 (LLII…DFFV), 109–129 (AFHN…LLFF), 186–206 (FSFL…LLEW), 219–239 (AGAV…MGVV), and 243–263 (RLYA…AISS).

The protein belongs to the UppP family.

It is found in the cell inner membrane. The catalysed reaction is di-trans,octa-cis-undecaprenyl diphosphate + H2O = di-trans,octa-cis-undecaprenyl phosphate + phosphate + H(+). Catalyzes the dephosphorylation of undecaprenyl diphosphate (UPP). Confers resistance to bacitracin. The sequence is that of Undecaprenyl-diphosphatase from Syntrophotalea carbinolica (strain DSM 2380 / NBRC 103641 / GraBd1) (Pelobacter carbinolicus).